The chain runs to 405 residues: POC1 centriolar protein homolog A (405 aa).

WD repeat units lie at residues 17 to 56 (GHRD…RAYR), 59 to 98 (GHKD…ESTV), 101 to 140 (AHTA…FLFS), 143 to 182 (QHIN…CIHS), 185 to 224 (EHGG…LLQH), 227 to 266 (LHSA…LLYT), and 269 to 308 (GHQG…VDYG). The interval 313–352 (RRPPPLTSSSGTLPKMDLPVPPGRDRSLESVQGEPQESIS) is disordered. The span at 341-352 (ESVQGEPQESIS) shows a compositional bias: polar residues. The stretch at 367–395 (QLDILTQTVSILEQRLTLTEDRLKQCLEN) forms a coiled coil.

The protein belongs to the WD repeat POC1 family. Interacts with POC1B. In terms of tissue distribution, widely expressed in embryonic and adult tissues.

It localises to the cytoplasm. The protein localises to the cytoskeleton. The protein resides in the microtubule organizing center. Its subcellular location is the centrosome. It is found in the centriole. It localises to the cilium basal body. The protein localises to the spindle pole. In terms of biological role, plays an important role in centriole assembly and/or stability and ciliogenesis. Involved in early steps of centriole duplication, as well as in the later steps of centriole length control. Acts in concert with POC1B to ensure centriole integrity and proper mitotic spindle formation. The chain is POC1 centriolar protein homolog A (Poc1a) from Mus musculus (Mouse).